The primary structure comprises 118 residues: Large ribosomal subunit protein bL21c (118 aa).

Belongs to the bacterial ribosomal protein bL21 family. In terms of assembly, part of the 50S ribosomal subunit.

It localises to the plastid. The protein localises to the chloroplast. This protein binds to 23S rRNA. This chain is Large ribosomal subunit protein bL21c, found in Zygnema circumcarinatum (Green alga).